The primary structure comprises 400 residues: TBC1 domain family member 13 (400 aa).

One can recognise a Rab-GAP TBC domain in the interval 35–345 (PCEGGLRCLC…RIWDSLFADG (311 aa)).

Interacts with RAB1A and RAB10; in a GTP-dependent manner. Expressed in adipocytes.

It localises to the membrane. Its subcellular location is the cytoplasm. In terms of biological role, acts as a GTPase-activating protein for RAB35. Together with RAB35 may be involved in regulation of insulin-induced glucose transporter SLC2A4/GLUT4 translocation to the plasma membrane in adipocytes. The protein is TBC1 domain family member 13 (Tbc1d13) of Mus musculus (Mouse).